The chain runs to 293 residues: 4-hydroxy-tetrahydrodipicolinate synthase (293 aa).

Thr45 is a pyruvate binding site. Tyr133 acts as the Proton donor/acceptor in catalysis. Residue Lys161 is the Schiff-base intermediate with substrate of the active site. Ile204 lines the pyruvate pocket.

Belongs to the DapA family. As to quaternary structure, homotetramer; dimer of dimers.

It localises to the cytoplasm. The enzyme catalyses L-aspartate 4-semialdehyde + pyruvate = (2S,4S)-4-hydroxy-2,3,4,5-tetrahydrodipicolinate + H2O + H(+). It functions in the pathway amino-acid biosynthesis; L-lysine biosynthesis via DAP pathway; (S)-tetrahydrodipicolinate from L-aspartate: step 3/4. Its function is as follows. Catalyzes the condensation of (S)-aspartate-beta-semialdehyde [(S)-ASA] and pyruvate to 4-hydroxy-tetrahydrodipicolinate (HTPA). The sequence is that of 4-hydroxy-tetrahydrodipicolinate synthase from Yersinia pseudotuberculosis serotype O:1b (strain IP 31758).